Consider the following 405-residue polypeptide: 3-hydroxy-3-methylglutaryl-coenzyme A reductase (405 aa).

Residues E100 and D310 each act as charge relay system in the active site. The Proton donor role is filled by H400.

It belongs to the HMG-CoA reductase family.

The enzyme catalyses (R)-mevalonate + 2 NADP(+) + CoA = (3S)-3-hydroxy-3-methylglutaryl-CoA + 2 NADPH + 2 H(+). Its pathway is metabolic intermediate biosynthesis; (R)-mevalonate biosynthesis; (R)-mevalonate from acetyl-CoA: step 3/3. In terms of biological role, converts HMG-CoA to mevalonate. The protein is 3-hydroxy-3-methylglutaryl-coenzyme A reductase (hmgA) of Methanocaldococcus jannaschii (strain ATCC 43067 / DSM 2661 / JAL-1 / JCM 10045 / NBRC 100440) (Methanococcus jannaschii).